Reading from the N-terminus, the 360-residue chain is AA9 family lytic polysaccharide monooxygenase A (360 aa).

The first 19 residues, 1-19, serve as a signal peptide directing secretion; that stretch reads MKTSFGLLALAAAAKLVNA. Cu(2+) is bound by residues histidine 20 and histidine 102. Cysteine 62 and cysteine 183 are joined by a disulfide. Histidine 169 provides a ligand contact to O2. Tyrosine 180 lines the Cu(2+) pocket. A disordered region spans residues 254–293; sequence TSAASASSTKAPATTAAPVQTESAKPATSTTQAAAPTTLV. The CBM1 domain maps to 322 to 358; it reads GVVKMYAQCGGMNYSGSTTCESGLTCKQWNPYYHQCV. Residue asparagine 334 is glycosylated (N-linked (GlcNAc...) asparagine).

This sequence belongs to the polysaccharide monooxygenase AA9 family. It depends on Cu(2+) as a cofactor.

The protein localises to the secreted. The catalysed reaction is [(1-&gt;4)-beta-D-glucosyl]n+m + reduced acceptor + O2 = 4-dehydro-beta-D-glucosyl-[(1-&gt;4)-beta-D-glucosyl]n-1 + [(1-&gt;4)-beta-D-glucosyl]m + acceptor + H2O.. Functionally, lytic polysaccharide monooxygenase (LPMO) that depolymerizes crystalline and amorphous polysaccharides via the oxidation of scissile alpha- or beta-(1-4)-glycosidic bonds, yielding C4 oxidation products. Catalysis by LPMOs requires the reduction of the active-site copper from Cu(II) to Cu(I) by a reducing agent and H(2)O(2) or O(2) as a cosubstrate. This Aspergillus terreus (strain NIH 2624 / FGSC A1156) protein is AA9 family lytic polysaccharide monooxygenase A (eglD).